We begin with the raw amino-acid sequence, 256 residues long: Omega-amidase YafV (256 aa).

The CN hydrolase domain occupies 4 to 234 (LKITLLQQPL…ATRIDAELSM (231 aa)). Catalysis depends on Glu-42, which acts as the Proton acceptor. The active-site Proton donor is Lys-107. The active-site Nucleophile is the Cys-141.

It belongs to the carbon-nitrogen hydrolase superfamily. NIT1/NIT2 family.

It carries out the reaction a monoamide of a dicarboxylate + H2O = a dicarboxylate + NH4(+). Hydrolyzes alpha-ketoglutaramate (a-KGM) to alpha-ketoglutarate (alpha-KG) and ammonia, has weak activity on L-glutamine, almost no activity on deaminated glutathione (dGSH) and none on glutathione. May function as a metabolite repair enzyme. The sequence is that of Omega-amidase YafV (yafV) from Escherichia coli (strain K12).